The chain runs to 1036 residues: Lethal(2) giant larvae protein homolog 1 (1036 aa).

WD repeat units follow at residues 38–71 (SALA…FTGL), 78–119 (VTQM…GLSF), 139–175 (VTVV…GQTL), 199–233 (SLQG…EHVF), 239–271 (LESL…GSPP), 289–331 (AINK…ETLV), 339–373 (VIDF…VLDL), 395–473 (TCSA…YKLS), 517–592 (QKVA…RVLI), and 601–662 (TAVA…LRQS). Phosphoserine is present on Ser-662. The interval 670–694 (RVSGKKRATTASSKLQEANAQLAEQ) is disordered. Residues 678–693 (TTASSKLQEANAQLAE) are compositionally biased toward polar residues. WD repeat units follow at residues 722–782 (VRCL…KEVQ), 791–843 (AIAV…VSAK), 848–901 (LTAH…VHYS), and 915–938 (VFTR…SLSA). The residue at position 957 (Thr-957) is a Phosphothreonine. Ser-964, Ser-982, and Ser-989 each carry phosphoserine. The disordered stretch occupies residues 980-1002 (PESCEGSPSSAHSKRADTMEPPE).

It belongs to the WD repeat L(2)GL family. In terms of assembly, associated with nonmuscle myosin II heavy chain. Interacts with PRKCI/aPKC, PARD6B/Par-6 and PARD6A. Interacts with STX4A. Interacts with DCAF1. Interacts with RAB10 (GDP-bound form); the interaction is direct and promotes RAB10 association with membranes and activation through competition with the Rab inhibitor GDI1. In terms of processing, phosphorylated by PRKCI. As to expression, expressed at high level in the testis and at lower level in ovary, brain, spleen and kidney.

Its subcellular location is the early endosome membrane. The protein localises to the golgi apparatus. The protein resides in the trans-Golgi network membrane. It localises to the golgi apparatus membrane. It is found in the cell projection. Its subcellular location is the axon. The protein localises to the cytoplasm. The protein resides in the cytoskeleton. Functionally, cortical cytoskeleton protein found in a complex involved in maintaining cell polarity and epithelial integrity. Involved in the regulation of mitotic spindle orientation, proliferation, differentiation and tissue organization of neuroepithelial cells. Involved in axonogenesis through RAB10 activation thereby regulating vesicular membrane trafficking toward the axonal plasma membrane. The chain is Lethal(2) giant larvae protein homolog 1 (Llgl1) from Rattus norvegicus (Rat).